The chain runs to 604 residues: Glutamine--fructose-6-phosphate aminotransferase [isomerizing] (604 aa).

The active-site Nucleophile; for GATase activity is the cysteine 2. The region spanning 2-219 is the Glutamine amidotransferase type-2 domain; the sequence is CGIMGAVSER…EGDSACVTTQ (218 aa). SIS domains are found at residues 279-427 and 454-594; these read LRAS…DNRA and LASL…VDQP. The For Fru-6P isomerization activity role is filled by lysine 599.

In terms of assembly, homodimer.

It is found in the cytoplasm. It catalyses the reaction D-fructose 6-phosphate + L-glutamine = D-glucosamine 6-phosphate + L-glutamate. In terms of biological role, catalyzes the first step in hexosamine metabolism, converting fructose-6P into glucosamine-6P using glutamine as a nitrogen source. The protein is Glutamine--fructose-6-phosphate aminotransferase [isomerizing] of Legionella pneumophila (strain Paris).